The chain runs to 1075 residues: Protein nervous wreck (1075 aa).

The F-BAR domain occupies 11-289 (VKFLKNLHTE…QAQQLTREYN (279 aa)). Disordered stretches follow at residues 361–381 (LRDSGQRTDPNDPNGPDLDTK) and 431–536 (SASS…DEPI). Residues 431-453 (SASSISMRTDASGQGENPSSDSF) show a composition bias toward polar residues. The span at 469 to 482 (PKQEQQLSRDRTFS) shows a compositional bias: basic and acidic residues. Low complexity predominate over residues 493–512 (SAAAASSAAAASSSMMASSA). SH3 domains are found at residues 542–603 (EAIF…IDQE) and 658–721 (SDVE…ECDE). 3 disordered regions span residues 722-747 (MGEPLSEGGDESPPPTAAPTFALPPA), 769-837 (SQDT…EKGA), and 864-917 (GADK…EGNA). Composition is skewed to pro residues over residues 733-747 (SPPPTAAPTFALPPA) and 809-818 (QPPPSLPPPQ). A compositionally biased stretch (low complexity) spans 819 to 837 (LAKAGGSAPGSGSKVEKGA). The segment covering 883–897 (VSKEQPAEVAKKPDI) has biased composition (basic and acidic residues).

As to quaternary structure, homodimer. Interacts (via SH3 domain 1) with WASp. Interacts (via SH3 domain 1) with shi/dynamin. Interacts (via SH3 domain 2) with Dap160. Interacts (via F-BAR domain) with SH3PX1. Interacts (via SH3 domain 2) with Snx16. Identified in a complex with Syn and Syt1. As to expression, detected in larval body wall muscle. Detected at the neuromuscular junction, on motoneuron axons and axon terminals, at synaptic boutons in the periactive zone surrounding the synapse (at protein level). Detected on motoneuron axons and axon terminals, at synaptic boutons in the periactive zone surrounding the synapse.

The protein resides in the endomembrane system. Its subcellular location is the synapse. It localises to the cell projection. The protein localises to the axon. It is found in the presynaptic cell membrane. The protein resides in the cytoplasmic vesicle. Its subcellular location is the secretory vesicle. It localises to the synaptic vesicle. The protein localises to the recycling endosome. Functionally, adapter protein that provides a link between vesicular membrane traffic and the actin assembly machinery. Acts together with Cdc42 to stimulate actin nucleation mediated by WASp and the ARP2/3 complex. Binds to membranes enriched in phosphatidylinositol 4,5-bisphosphate and causes local membrane deformation. Required for normal structure and function of synapses at the neuromuscular junction. Plays a role in synaptic vesicle trafficking. Required for the release of a normal number of synaptic vesicles per action potential. The chain is Protein nervous wreck from Drosophila melanogaster (Fruit fly).